We begin with the raw amino-acid sequence, 430 residues long: MAAIVIVGAQWGDEGKGKATDILGGRVDYVVKPNGGNNAGHTVVVGGEKYELKLLPAGILSENAVPVLGNGVVINLEALFEEIEGLEARGADASRLRISANAHLVAPYHQTLDRVQERFLGKRAIGTTGRGIGPAYADKVARVGVRVQDIFDESILRQKVESALDIKNQMLVKMYNRKAIDPETIVEYFLSYRDRLEPMVVDSEYELNTALDAGKHVLMEGGQATMLDVDHGTYPFVTSSNPTAGGASVGSGVGPTRITHSLGIIKAYTTRVGAGPFPTELFDKWGEYLQTTGGEVGVNTGRTRRCGWYDSVIARYASRVNGFTDYFLTKLDVLTGIGEIPICVAYDVDGERFDEMPLTQSQFHHAQPIYETMPAWEEDITGCTTFEELPQKAQDYVLRLEELSGTRMSYIGVGPGRDQTIVRHDVLDEK.

GTP-binding positions include 12–18 (GDEGKGK) and 40–42 (GHT). The active-site Proton acceptor is Asp-13. Residues Asp-13 and Gly-40 each contribute to the Mg(2+) site. Residues 13–16 (DEGK), 38–41 (NAGH), Thr-128, Arg-142, Gln-223, Thr-238, and Arg-302 each bind IMP. His-41 (proton donor) is an active-site residue. 298-304 (VNTGRTR) contributes to the substrate binding site. Residues Arg-304, 330 to 332 (KLD), and 412 to 414 (GVG) each bind GTP.

This sequence belongs to the adenylosuccinate synthetase family. Homodimer. Requires Mg(2+) as cofactor.

It is found in the cytoplasm. It catalyses the reaction IMP + L-aspartate + GTP = N(6)-(1,2-dicarboxyethyl)-AMP + GDP + phosphate + 2 H(+). It functions in the pathway purine metabolism; AMP biosynthesis via de novo pathway; AMP from IMP: step 1/2. Its function is as follows. Plays an important role in the de novo pathway of purine nucleotide biosynthesis. Catalyzes the first committed step in the biosynthesis of AMP from IMP. This is Adenylosuccinate synthetase from Corynebacterium ammoniagenes (Brevibacterium ammoniagenes).